Reading from the N-terminus, the 606-residue chain is Aspartate--tRNA(Asp/Asn) ligase (606 aa).

Residue glutamate 175 participates in L-aspartate binding. The interval 199 to 202 (QLFK) is aspartate. Arginine 221 contacts L-aspartate. ATP is bound by residues 221–223 (RDE) and glutamine 230. Residue histidine 453 coordinates L-aspartate. Glutamate 487 contacts ATP. L-aspartate is bound at residue arginine 494. Position 539-542 (539-542 (GWDR)) interacts with ATP. Residues 564-606 (GGVDPLTDAPGTIPAEQRKETGVDFKPEKAAKAAQGEKAGKES) form a disordered region. Residues 579–594 (EQRKETGVDFKPEKAA) show a composition bias toward basic and acidic residues.

This sequence belongs to the class-II aminoacyl-tRNA synthetase family. Type 1 subfamily. In terms of assembly, homodimer.

The protein resides in the cytoplasm. The catalysed reaction is tRNA(Asx) + L-aspartate + ATP = L-aspartyl-tRNA(Asx) + AMP + diphosphate. Functionally, aspartyl-tRNA synthetase with relaxed tRNA specificity since it is able to aspartylate not only its cognate tRNA(Asp) but also tRNA(Asn). Reaction proceeds in two steps: L-aspartate is first activated by ATP to form Asp-AMP and then transferred to the acceptor end of tRNA(Asp/Asn). The sequence is that of Aspartate--tRNA(Asp/Asn) ligase from Corynebacterium aurimucosum (strain ATCC 700975 / DSM 44827 / CIP 107346 / CN-1) (Corynebacterium nigricans).